Consider the following 214-residue polypeptide: 3-isopropylmalate dehydratase small subunit (214 aa).

This sequence belongs to the LeuD family. LeuD type 1 subfamily. Heterodimer of LeuC and LeuD.

It carries out the reaction (2R,3S)-3-isopropylmalate = (2S)-2-isopropylmalate. It functions in the pathway amino-acid biosynthesis; L-leucine biosynthesis; L-leucine from 3-methyl-2-oxobutanoate: step 2/4. Functionally, catalyzes the isomerization between 2-isopropylmalate and 3-isopropylmalate, via the formation of 2-isopropylmaleate. This is 3-isopropylmalate dehydratase small subunit from Pseudomonas entomophila (strain L48).